Consider the following 342-residue polypeptide: 4-hydroxythreonine-4-phosphate dehydrogenase (342 aa).

Residues H140 and T141 each contribute to the substrate site. A divalent metal cation-binding residues include H175, H220, and H275. The substrate site is built by K283, N292, and R301.

Belongs to the PdxA family. Homodimer. Zn(2+) is required as a cofactor. The cofactor is Mg(2+). It depends on Co(2+) as a cofactor.

It is found in the cytoplasm. The catalysed reaction is 4-(phosphooxy)-L-threonine + NAD(+) = 3-amino-2-oxopropyl phosphate + CO2 + NADH. The protein operates within cofactor biosynthesis; pyridoxine 5'-phosphate biosynthesis; pyridoxine 5'-phosphate from D-erythrose 4-phosphate: step 4/5. In terms of biological role, catalyzes the NAD(P)-dependent oxidation of 4-(phosphooxy)-L-threonine (HTP) into 2-amino-3-oxo-4-(phosphooxy)butyric acid which spontaneously decarboxylates to form 3-amino-2-oxopropyl phosphate (AHAP). This Rhizobium meliloti (strain 1021) (Ensifer meliloti) protein is 4-hydroxythreonine-4-phosphate dehydrogenase.